The following is a 730-amino-acid chain: Meiotically up-regulated gene 70 protein (730 aa).

The interval 1-27 (MTVGTLSVVSSTASDTASHVSDTRKRQ) is disordered. Residues 7 to 20 (SVVSSTASDTASHV) show a composition bias toward low complexity. 4 CBS domains span residues 69–127 (ALDP…LNAR), 135–200 (MSTS…RIAR), 263–319 (SSEE…GLDP), and 328–385 (MTPH…PEEE). The next 2 helical transmembrane spans lie at 290–310 (AVLVMDNGAVSGVFTAHDVVL) and 358–378 (VVDESDAIIGMLSLFHLATAI). Positions 420–517 (ENYDVNPPLP…ENGSNSFAAS (98 aa)) are disordered. 2 stretches are compositionally biased toward polar residues: residues 458–470 (AWQNENLSSNNKP) and 480–515 (YNFSNNPPTAMSEQSFHPSVSQKPMDTPENGSNSFA). A PB1 domain is found at 572 to 649 (PSQFTIKYRS…ARRRGLPRLE (78 aa)). Residues 706–726 (PIYIGIVSSSIVILAVSMWYL) traverse the membrane as a helical segment.

It localises to the cytoplasm. The protein localises to the nucleus membrane. Has a role in meiosis. The protein is Meiotically up-regulated gene 70 protein (mug70) of Schizosaccharomyces pombe (strain 972 / ATCC 24843) (Fission yeast).